The sequence spans 506 residues: Photosystem II CP47 reaction center protein (506 aa).

6 helical membrane-spanning segments follow: residues 21–36 (SVHI…WAGS), 101–115 (ILFS…IWHW), 140–156 (GIHL…FGAF), 203–218 (IAAG…FHLS), 237–252 (VLSS…AFVV), and 457–472 (SFAL…HGAR).

Belongs to the PsbB/PsbC family. PsbB subfamily. In terms of assembly, PSII is composed of 1 copy each of membrane proteins PsbA, PsbB, PsbC, PsbD, PsbE, PsbF, PsbH, PsbI, PsbJ, PsbK, PsbL, PsbM, PsbT, PsbX, PsbY, PsbZ, Psb30/Ycf12, at least 3 peripheral proteins of the oxygen-evolving complex and a large number of cofactors. It forms dimeric complexes. Requires Binds multiple chlorophylls. PSII binds additional chlorophylls, carotenoids and specific lipids. as cofactor.

The protein resides in the plastid. Its subcellular location is the chloroplast thylakoid membrane. Its function is as follows. One of the components of the core complex of photosystem II (PSII). It binds chlorophyll and helps catalyze the primary light-induced photochemical processes of PSII. PSII is a light-driven water:plastoquinone oxidoreductase, using light energy to abstract electrons from H(2)O, generating O(2) and a proton gradient subsequently used for ATP formation. This is Photosystem II CP47 reaction center protein from Cucumis sativus (Cucumber).